Consider the following 799-residue polypeptide: Phospholipase A-2-activating protein (799 aa).

WD repeat units follow at residues 21–62 (GHEL…RGFI), 69–113 (GHSN…PLYT), 116–154 (GHKNTVCSLSSGKFGTLLSGSWDTTGKVWLNDKCMMTLQ), 155–194 (GHTAAVWAVKILPEQGLMLTGSADKSIKLWKAGRCEMTFL), 196–233 (HEDCVRGLATINDTEFLSCSNDASVRRWLITGECLQIY), 235–274 (GHTNYIYSVCLFPNSQDFVTTSEDRSIRIWRKGECTQTIR), and 276–314 (PAQSVWCCCVLDNGDIVVGASDGIIRVFTESPDRIASIE). The region spanning 372-471 (QWSTGEGRWM…AGQTPSTNLG (100 aa)) is the PFU domain. In terms of domain architecture, PUL spans 537–798 (AYFPKTKPVT…NECCRLLLNM (262 aa)). ARM repeat units follow at residues 550 to 592 (ANPS…NPSG), 593 to 624 (GTVTAQQLDTLWRVVNWPEDLIFPALDVLRIS), 625 to 673 (IKNP…SFFC), 674 to 719 (DPGS…CLHK), 720 to 759 (VSDIEGKAQCLSAISSVIEVVQDLEAIFRLLVALGTLISG), and 760 to 799 (DTNAMQLAKSLGVDSQIKKYMSVTEPAKVNECCRLLLNML).

The protein belongs to the WD repeat PLAP family.

The protein localises to the nucleus. It is found in the cytoplasm. The protein resides in the synapse. In terms of biological role, plays a role in protein ubiquitination, sorting and degradation through its association with VCP. Involved in ubiquitin-mediated membrane proteins trafficking to late endosomes in an ESCRT-dependent manner, and hence plays a role in synaptic vesicle recycling. May play a role in macroautophagy, regulating for instance the clearance of damaged lysosomes. Plays a role in cerebellar Purkinje cell development. Positively regulates cytosolic and calcium-independent phospholipase A2 activities in a tumor necrosis factor alpha (TNF-alpha)- or lipopolysaccharide (LPS)-dependent manner, and hence prostaglandin E2 biosynthesis. The sequence is that of Phospholipase A-2-activating protein (plaa) from Xenopus laevis (African clawed frog).